A 201-amino-acid chain; its full sequence is NADH-quinone oxidoreductase subunit C (201 aa).

It belongs to the complex I 30 kDa subunit family. As to quaternary structure, NDH-1 is composed of 14 different subunits. Subunits NuoB, C, D, E, F, and G constitute the peripheral sector of the complex.

The protein localises to the cell inner membrane. It carries out the reaction a quinone + NADH + 5 H(+)(in) = a quinol + NAD(+) + 4 H(+)(out). Its function is as follows. NDH-1 shuttles electrons from NADH, via FMN and iron-sulfur (Fe-S) centers, to quinones in the respiratory chain. The immediate electron acceptor for the enzyme in this species is believed to be ubiquinone. Couples the redox reaction to proton translocation (for every two electrons transferred, four hydrogen ions are translocated across the cytoplasmic membrane), and thus conserves the redox energy in a proton gradient. The sequence is that of NADH-quinone oxidoreductase subunit C from Azoarcus sp. (strain BH72).